The sequence spans 340 residues: Phenylalanine--tRNA ligase alpha subunit (340 aa).

Residue E254 coordinates Mg(2+).

Belongs to the class-II aminoacyl-tRNA synthetase family. Phe-tRNA synthetase alpha subunit type 1 subfamily. Tetramer of two alpha and two beta subunits. It depends on Mg(2+) as a cofactor.

It is found in the cytoplasm. The catalysed reaction is tRNA(Phe) + L-phenylalanine + ATP = L-phenylalanyl-tRNA(Phe) + AMP + diphosphate + H(+). The sequence is that of Phenylalanine--tRNA ligase alpha subunit from Caldicellulosiruptor bescii (strain ATCC BAA-1888 / DSM 6725 / KCTC 15123 / Z-1320) (Anaerocellum thermophilum).